A 184-amino-acid chain; its full sequence is Gremlin-1 (184 aa).

The signal sequence occupies residues 1-24 (MVRTLYAIGAVFLLTGFLLPTAEG). The segment at 24–77 (GRKRNRGSQGAIPPPDKDQPNDSEQMQTQQQSGSRHRERGKGTSMPAEEVLESS) is disordered. An N-linked (GlcNAc...) asparagine glycan is attached at N44. Residues 45–56 (DSEQMQTQQQSG) show a composition bias toward polar residues. Intrachain disulfides connect C94-C144, C108-C158, C118-C176, and C122-C178. The region spanning 94–184 (CKTQPLKQTI…ECRCISIDLD (91 aa)) is the CTCK domain.

It belongs to the DAN family.

Its subcellular location is the secreted. Its function is as follows. Cytokine that may play a role in the development of the medial pallium and during optic nerve and pecten development by modulating BMP signaling. The protein is Gremlin-1 (GREM1) of Gallus gallus (Chicken).